The chain runs to 179 residues: Inorganic pyrophosphatase (179 aa).

Positions 30, 44, and 56 each coordinate substrate. Positions 66, 71, and 103 each coordinate Mg(2+). Residue tyrosine 142 coordinates substrate.

This sequence belongs to the PPase family. As to quaternary structure, homohexamer. The cofactor is Mg(2+).

Its subcellular location is the cytoplasm. The catalysed reaction is diphosphate + H2O = 2 phosphate + H(+). In terms of biological role, catalyzes the hydrolysis of inorganic pyrophosphate (PPi) forming two phosphate ions. This Rhodospirillum rubrum (strain ATCC 11170 / ATH 1.1.1 / DSM 467 / LMG 4362 / NCIMB 8255 / S1) protein is Inorganic pyrophosphatase.